Consider the following 277-residue polypeptide: NH(3)-dependent NAD(+) synthetase (277 aa).

An ATP-binding site is contributed by 47–54; the sequence is GISGGQDS. Position 53 (Asp53) interacts with Mg(2+). Arg141 contributes to the deamido-NAD(+) binding site. Thr161 serves as a coordination point for ATP. Residue Glu166 coordinates Mg(2+). 2 residues coordinate deamido-NAD(+): Lys174 and Asp181. Lys190 and Thr212 together coordinate ATP. Residue 261 to 262 coordinates deamido-NAD(+); the sequence is HK.

The protein belongs to the NAD synthetase family. Homodimer.

It catalyses the reaction deamido-NAD(+) + NH4(+) + ATP = AMP + diphosphate + NAD(+) + H(+). It participates in cofactor biosynthesis; NAD(+) biosynthesis; NAD(+) from deamido-NAD(+) (ammonia route): step 1/1. Catalyzes the ATP-dependent amidation of deamido-NAD to form NAD. Uses ammonia as a nitrogen source. This is NH(3)-dependent NAD(+) synthetase from Lactobacillus johnsonii (strain CNCM I-12250 / La1 / NCC 533).